A 193-amino-acid chain; its full sequence is 7-methyl-GTP pyrophosphatase (193 aa).

The active-site Proton acceptor is the Asp70.

It belongs to the Maf family. YceF subfamily. A divalent metal cation serves as cofactor.

It localises to the cytoplasm. It catalyses the reaction N(7)-methyl-GTP + H2O = N(7)-methyl-GMP + diphosphate + H(+). Functionally, nucleoside triphosphate pyrophosphatase that hydrolyzes 7-methyl-GTP (m(7)GTP). May have a dual role in cell division arrest and in preventing the incorporation of modified nucleotides into cellular nucleic acids. This Aliivibrio fischeri (strain ATCC 700601 / ES114) (Vibrio fischeri) protein is 7-methyl-GTP pyrophosphatase.